The following is a 413-amino-acid chain: Sulfoquinovose isomerase (413 aa).

5 residues coordinate 6-sulfo-beta-D-quinovose: Arg-55, Tyr-111, Asn-172, His-176, and Arg-238. Catalysis depends on His-248, which acts as the Proton donor/acceptor. Residues Glu-251, Gln-362, Gln-379, and His-383 each contribute to the 6-sulfo-beta-D-quinovose site. The active-site Proton donor/acceptor is the His-383.

This sequence belongs to the N-acylglucosamine 2-epimerase family. Homohexamer.

It catalyses the reaction 6-sulfo-beta-D-quinovose = 6-deoxy-6-sulfo-D-fructose. It carries out the reaction 6-sulfo-beta-D-quinovose = 6-sulfo-D-rhamnose. With respect to regulation, significantly inhibited by Cu(2+), Fe(3+) and Co(2+). Partially inhibited by Mg(2+), Ca(2+) and Mn(2+). Also inhibited by ATP, ADP, dATP, TTP and GTP. Catalyzes the isomerization of sulfoquinovose (SQ) to 6-deoxy-6-sulfo-D-fructose (SF). Can also catalyze the interconversion of SQ and sulforhamnose (SR). Has a clear preference for beta-SQ and little-to-no activity on alpha-SQ. In vitro, can also catalyze the interconversion of mannose, fructose and glucose, or lyxose and xylulose, but has extremely low activity with glucose. The polypeptide is Sulfoquinovose isomerase (yihS) (Escherichia coli (strain K12)).